A 127-amino-acid polypeptide reads, in one-letter code: Snaclec bothroinsularin subunit beta (127 aa).

3 disulfide bridges follow: C2–C13, C30–C123, and C100–C115. The 116-residue stretch at 9–124 (YEGSCYRVFE…CTKLEYFVCE (116 aa)) folds into the C-type lectin domain.

It belongs to the snaclec family. Heterodimer of subunits alpha and beta; disulfide-linked. As to expression, expressed by the venom gland.

It is found in the secreted. Its function is as follows. Thrombin and prothrombin (F2) inhibitor. The IC(50) of thrombin-induced platelet aggregation and fibrinocoagulation is 62 and 35 nM, respectively. Its inhibitory activity is at least 10-fold lower than that observed for other thrombin inhibitors. In Bothrops insularis (Golden lancehead), this protein is Snaclec bothroinsularin subunit beta.